The following is a 369-amino-acid chain: 4-hydroxy-3-methylbut-2-en-1-yl diphosphate synthase (flavodoxin) (369 aa).

[4Fe-4S] cluster contacts are provided by Cys270, Cys273, Cys305, and Glu312.

The protein belongs to the IspG family. It depends on [4Fe-4S] cluster as a cofactor.

It catalyses the reaction (2E)-4-hydroxy-3-methylbut-2-enyl diphosphate + oxidized [flavodoxin] + H2O + 2 H(+) = 2-C-methyl-D-erythritol 2,4-cyclic diphosphate + reduced [flavodoxin]. It participates in isoprenoid biosynthesis; isopentenyl diphosphate biosynthesis via DXP pathway; isopentenyl diphosphate from 1-deoxy-D-xylulose 5-phosphate: step 5/6. Converts 2C-methyl-D-erythritol 2,4-cyclodiphosphate (ME-2,4cPP) into 1-hydroxy-2-methyl-2-(E)-butenyl 4-diphosphate. This Pseudomonas putida (strain ATCC 700007 / DSM 6899 / JCM 31910 / BCRC 17059 / LMG 24140 / F1) protein is 4-hydroxy-3-methylbut-2-en-1-yl diphosphate synthase (flavodoxin).